The primary structure comprises 191 residues: FMN reductase (NADH) RutF (191 aa).

It belongs to the non-flavoprotein flavin reductase family. RutF subfamily.

It carries out the reaction FMNH2 + NAD(+) = FMN + NADH + 2 H(+). Catalyzes the reduction of FMN to FMNH2 which is used to reduce pyrimidine by RutA via the Rut pathway. The protein is FMN reductase (NADH) RutF of Escherichia coli O1:K1 / APEC.